Reading from the N-terminus, the 128-residue chain is uncharacterized protein (128 aa).

As to expression, high expression in pituitary gland and weak in pancreas.

This is an uncharacterized protein from Homo sapiens (Human).